Reading from the N-terminus, the 221-residue chain is Josephin-like protein (221 aa).

Residues 1 to 37 form a disordered region; that stretch reads MESPSARTLGNSLGDDSGNGNENGNGSGNGNTTMMPH. Residues 9–20 are compositionally biased toward low complexity; that stretch reads LGNSLGDDSGNG. The Josephin domain occupies 36–214; it reads PHGIYHERQT…DCKDKSQQRW (179 aa). The active-site Nucleophile is cysteine 49. Histidine 152 functions as the Proton acceptor in the catalytic mechanism.

The catalysed reaction is Thiol-dependent hydrolysis of ester, thioester, amide, peptide and isopeptide bonds formed by the C-terminal Gly of ubiquitin (a 76-residue protein attached to proteins as an intracellular targeting signal).. Functionally, may act as a deubiquitinating enzyme. The sequence is that of Josephin-like protein from Drosophila melanogaster (Fruit fly).